The primary structure comprises 207 residues: MSAFPLIIGVDEAGRGPWAGPVTAAAVILDPAQPIEGLTDSKKLSEKARDRLAPLIRERALAWCVAEASVEEIDTLNIRQATFLAMRRAILGQSRTDQDRSGQFETVSATAGLILIDGNALPGDLPAPARAIIKGDLTEPAISAASILAKTHRDAQMASLCNLYPGYGFSGHKGYGTAAHAAALTRLGPCPVHRQSFAPVRALLRPC.

An RNase H type-2 domain is found at 5–207 (PLIIGVDEAG…APVRALLRPC (203 aa)). Residues aspartate 11, glutamate 12, and aspartate 117 each coordinate a divalent metal cation.

The protein belongs to the RNase HII family. Mn(2+) is required as a cofactor. Mg(2+) serves as cofactor.

It localises to the cytoplasm. It catalyses the reaction Endonucleolytic cleavage to 5'-phosphomonoester.. Functionally, endonuclease that specifically degrades the RNA of RNA-DNA hybrids. The sequence is that of Ribonuclease HII from Hyphomonas neptunium (strain ATCC 15444).